The following is a 101-amino-acid chain: Urease subunit beta (101 aa).

Belongs to the urease beta subunit family. As to quaternary structure, heterotrimer of UreA (gamma), UreB (beta) and UreC (alpha) subunits. Three heterotrimers associate to form the active enzyme.

The protein localises to the cytoplasm. The catalysed reaction is urea + 2 H2O + H(+) = hydrogencarbonate + 2 NH4(+). The protein operates within nitrogen metabolism; urea degradation; CO(2) and NH(3) from urea (urease route): step 1/1. This chain is Urease subunit beta, found in Ruegeria sp. (strain TM1040) (Silicibacter sp.).